A 533-amino-acid polypeptide reads, in one-letter code: Flavin-dependent halogenase armH4 (533 aa).

G16, A19, and E49 together coordinate FAD. 2 residues coordinate chloride: S337 and G338. Position 339 (V339) interacts with FAD.

The protein belongs to the flavin-dependent halogenase family.

It catalyses the reaction melleolide F + FADH2 + chloride + O2 = 6'-chloromelleolide F + FAD + 2 H2O + H(+). The enzyme catalyses melleolide F + bromide + FADH2 + O2 = 6'-bromomelleolide F + FAD + 2 H2O. In terms of biological role, flavin-dependent halogenase involved in the biosynthesis of melleolides, a range of antifungal and phytotoxic polyketide derivatives composed of an orsellinic acid (OA) moiety esterified to various sesquiterpene alcohols. The halogenase catalyzes the transfer of a single chlorine atom to the melleolide backbone, resulting in a 6'-chloromelleolide product. The enzyme acts on free substrate and does not depend on carrier-protein-dependent acceptor molecules. Can also catalyze the transfer of a single bromine atom to the melleolide backbone in vitro. This chain is Flavin-dependent halogenase armH4, found in Armillaria mellea (Honey mushroom).